The chain runs to 103 residues: Host transcription reprogramming factor 6 (103 aa).

The N-terminal stretch at 1 to 19 (MRATTAFQVIAFLAVGAAA) is a signal peptide. A C2H2-type zinc finger spans residues 66 to 92 (YWCPNQVCAKTFATQEERDHHIANTVH). The tract at residues 82–103 (ERDHHIANTVHPTNSKRDVLLQ) is disordered.

The protein localises to the secreted. Its subcellular location is the host nucleus. Functionally, probable secreted effector that translocates into the nuclei of host cells to reprogram the expression of targeted genes by binding on effector binding elements in rice. The protein is Host transcription reprogramming factor 6 of Pyricularia oryzae (strain 70-15 / ATCC MYA-4617 / FGSC 8958) (Rice blast fungus).